The primary structure comprises 856 residues: Mechanosensitive ion channel protein 6 (856 aa).

2 disordered regions span residues 45 to 86 and 116 to 226; these read GEGN…DPPT and RGLT…PFAA. 2 stretches are compositionally biased toward basic and acidic residues: residues 70 to 85 and 129 to 140; these read QQKD…EDPP and TKRDPVGRRDSR. Residues 155-168 are compositionally biased toward polar residues; sequence SGNNAPIQRSSSTL. Phosphoserine is present on serine 211. Acidic residues predominate over residues 217-226; the sequence is EEEEDDPFAA. Transmembrane regions (helical) follow at residues 242-262, 283-303, 323-343, and 360-380; these read IVLE…TLAI, LVLI…VFFI, AVQN…LFDE, and IFVC…LVKV. Phosphoserine is present on serine 462. Transmembrane regions (helical) follow at residues 615–635 and 651–671; these read MVNI…LGIT and AFIF…LFVI.

It belongs to the MscS (TC 1.A.23) family.

The protein localises to the membrane. Functionally, mechanosensitive channel that opens in response to stretch forces in the membrane lipid bilayer. This Arabidopsis thaliana (Mouse-ear cress) protein is Mechanosensitive ion channel protein 6 (MSL6).